The following is a 514-amino-acid chain: ATP synthase subunit alpha (514 aa).

Residue 170–177 coordinates ATP; sequence GDRQIGKT.

It belongs to the ATPase alpha/beta chains family. F-type ATPases have 2 components, CF(1) - the catalytic core - and CF(0) - the membrane proton channel. CF(1) has five subunits: alpha(3), beta(3), gamma(1), delta(1), epsilon(1). CF(0) has three main subunits: a(1), b(2) and c(9-12). The alpha and beta chains form an alternating ring which encloses part of the gamma chain. CF(1) is attached to CF(0) by a central stalk formed by the gamma and epsilon chains, while a peripheral stalk is formed by the delta and b chains.

It localises to the cell inner membrane. The enzyme catalyses ATP + H2O + 4 H(+)(in) = ADP + phosphate + 5 H(+)(out). In terms of biological role, produces ATP from ADP in the presence of a proton gradient across the membrane. The alpha chain is a regulatory subunit. This chain is ATP synthase subunit alpha, found in Pseudomonas entomophila (strain L48).